A 210-amino-acid chain; its full sequence is RNA chaperone ProQ (210 aa).

Positions 98-127 (HAKASLEESKAKVAARRKEQAKKAREEAKA) are enriched in basic and acidic residues. Residues 98–155 (HAKASLEESKAKVAARRKEQAKKAREEAKAKKPARATTPPKRRPQPAAVAKKQEKPVE) form a disordered region.

Belongs to the ProQ family.

The protein resides in the cytoplasm. RNA chaperone with significant RNA binding, RNA strand exchange and RNA duplexing activities. The polypeptide is RNA chaperone ProQ (Aliivibrio salmonicida (strain LFI1238) (Vibrio salmonicida (strain LFI1238))).